Here is a 601-residue protein sequence, read N- to C-terminus: Tripeptidyl-peptidase SED4 (601 aa).

The signal sequence occupies residues 1-22 (MVSFTLRAIGACLVSLPALVTA). The propeptide at 23 to 202 (APTSHISGDF…SVFTSDLEIT (180 aa)) is removed in mature form. N-linked (GlcNAc...) asparagine glycosylation is found at asparagine 210 and asparagine 281. The 390-residue stretch at 212–601 (TITPDCIRDL…ETLSKLVLQY (390 aa)) folds into the Peptidase S53 domain. Active-site charge relay system residues include glutamate 288 and aspartate 292. Asparagine 323 carries an N-linked (GlcNAc...) asparagine glycan. Residue serine 504 is the Charge relay system of the active site. The Ca(2+) site is built by aspartate 546 and isoleucine 547. Residue asparagine 575 is glycosylated (N-linked (GlcNAc...) asparagine). Residues glycine 579 and aspartate 581 each coordinate Ca(2+).

It depends on Ca(2+) as a cofactor.

Its subcellular location is the secreted. It localises to the extracellular space. The enzyme catalyses Release of an N-terminal tripeptide from a polypeptide.. Functionally, secreted tripeptidyl-peptidase which degrades proteins at acidic pHs and is involved in virulence. The protein is Tripeptidyl-peptidase SED4 (SED4) of Arthroderma otae (strain ATCC MYA-4605 / CBS 113480) (Microsporum canis).